We begin with the raw amino-acid sequence, 228 residues long: ATP-dependent dethiobiotin synthetase BioD 1 (228 aa).

Residue 13 to 18 (EVGKTV) coordinates ATP. Position 17 (Thr-17) interacts with Mg(2+). Lys-38 is an active-site residue. Position 42 (Ser-42) interacts with substrate. ATP-binding positions include Asp-55, 116-119 (EGAG), 176-177 (ND), and 205-207 (PWL). Asp-55 and Glu-116 together coordinate Mg(2+).

This sequence belongs to the dethiobiotin synthetase family. In terms of assembly, homodimer. Requires Mg(2+) as cofactor.

The protein localises to the cytoplasm. It carries out the reaction (7R,8S)-7,8-diammoniononanoate + CO2 + ATP = (4R,5S)-dethiobiotin + ADP + phosphate + 3 H(+). Its pathway is cofactor biosynthesis; biotin biosynthesis; biotin from 7,8-diaminononanoate: step 1/2. Its function is as follows. Catalyzes a mechanistically unusual reaction, the ATP-dependent insertion of CO2 between the N7 and N8 nitrogen atoms of 7,8-diaminopelargonic acid (DAPA, also called 7,8-diammoniononanoate) to form a ureido ring. The protein is ATP-dependent dethiobiotin synthetase BioD 1 of Salmonella typhi.